Reading from the N-terminus, the 93-residue chain is Integration host factor subunit beta (93 aa).

The protein belongs to the bacterial histone-like protein family. As to quaternary structure, heterodimer of an alpha and a beta chain.

Its function is as follows. This protein is one of the two subunits of integration host factor, a specific DNA-binding protein that functions in genetic recombination as well as in transcriptional and translational control. The polypeptide is Integration host factor subunit beta (ihfB) (Mannheimia haemolytica (Pasteurella haemolytica)).